The following is an 87-amino-acid chain: Putative defensin-like protein 304 (87 aa).

A signal peptide spans 1-19 (MKSNKVTFFLGLFLVSAFC). Disulfide bonds link Cys-27–Cys-46, Cys-33–Cys-51, and Cys-40–Cys-53.

Belongs to the DEFL family.

Its subcellular location is the secreted. The protein is Putative defensin-like protein 304 of Arabidopsis thaliana (Mouse-ear cress).